A 675-amino-acid chain; its full sequence is Glycerophosphocholine phosphodiesterase GPCPD1 (675 aa).

The CBM20 domain maps to 1–115 (MTPSQVTFEI…IIIDDGQFGI (115 aa)). Substrate is bound by residues Arg-70 and 88 to 89 (HK). 2 positions are modified to phosphoserine: Ser-178 and Ser-427. The region spanning 321–621 (PLDVGHRGAG…DRIYDWMPEQ (301 aa)) is the GP-PDE domain. Tyr-611 is modified (phosphotyrosine).

The protein belongs to the glycerophosphoryl diester phosphodiesterase family. As to expression, widely expressed with highest levels in skeletal muscle and heart.

The protein localises to the cytoplasm. It is found in the cytosol. The enzyme catalyses sn-glycerol 3-phosphocholine + H2O = sn-glycerol 3-phosphate + choline + H(+). In terms of biological role, may be involved in the negative regulation of skeletal muscle differentiation, independently of its glycerophosphocholine phosphodiesterase activity. The sequence is that of Glycerophosphocholine phosphodiesterase GPCPD1 (Gpcpd1) from Mus musculus (Mouse).